A 324-amino-acid polypeptide reads, in one-letter code: Glyceraldehyde-3-phosphate dehydrogenase 1 (324 aa).

NAD(+)-binding positions include 13–14, aspartate 35, and lysine 85; that span reads RI. Residues 157 to 159, threonine 188, 217 to 218, and arginine 240 contribute to the D-glyceraldehyde 3-phosphate site; these read SCT and TG. Cysteine 158 functions as the Nucleophile in the catalytic mechanism. Asparagine 322 is a binding site for NAD(+).

It belongs to the glyceraldehyde-3-phosphate dehydrogenase family. As to quaternary structure, homotetramer.

It localises to the cytoplasm. The catalysed reaction is D-glyceraldehyde 3-phosphate + phosphate + NAD(+) = (2R)-3-phospho-glyceroyl phosphate + NADH + H(+). It participates in carbohydrate degradation; glycolysis; pyruvate from D-glyceraldehyde 3-phosphate: step 1/5. The protein is Glyceraldehyde-3-phosphate dehydrogenase 1 (GPD-1) of Globodera rostochiensis (Golden nematode worm).